A 107-amino-acid chain; its full sequence is SH3 domain-binding glutamic acid-rich-like protein 2 (107 aa).

The SH3-binding motif lies at 61–67; that stretch reads QGNPLPP.

The protein belongs to the SH3BGR family.

It localises to the nucleus. This chain is SH3 domain-binding glutamic acid-rich-like protein 2 (Sh3bgrl2), found in Mus musculus (Mouse).